The primary structure comprises 400 residues: Imidazolonepropionase (400 aa).

Residues H70 and H72 each contribute to the Fe(3+) site. Zn(2+)-binding residues include H70 and H72. 4-imidazolone-5-propanoate-binding residues include R79, Y142, and H175. Y142 provides a ligand contact to N-formimidoyl-L-glutamate. Residue H239 participates in Fe(3+) binding. H239 provides a ligand contact to Zn(2+). A 4-imidazolone-5-propanoate-binding site is contributed by Q242. A Fe(3+)-binding site is contributed by D314. D314 contributes to the Zn(2+) binding site. Residues N316 and G318 each coordinate N-formimidoyl-L-glutamate. T319 contacts 4-imidazolone-5-propanoate.

The protein belongs to the metallo-dependent hydrolases superfamily. HutI family. Requires Zn(2+) as cofactor. Fe(3+) serves as cofactor.

The protein localises to the cytoplasm. It carries out the reaction 4-imidazolone-5-propanoate + H2O = N-formimidoyl-L-glutamate. It functions in the pathway amino-acid degradation; L-histidine degradation into L-glutamate; N-formimidoyl-L-glutamate from L-histidine: step 3/3. Catalyzes the hydrolytic cleavage of the carbon-nitrogen bond in imidazolone-5-propanoate to yield N-formimidoyl-L-glutamate. It is the third step in the universal histidine degradation pathway. This Methylobacterium nodulans (strain LMG 21967 / CNCM I-2342 / ORS 2060) protein is Imidazolonepropionase.